Consider the following 76-residue polypeptide: Small ribosomal subunit protein bS16 (76 aa).

It belongs to the bacterial ribosomal protein bS16 family.

This is Small ribosomal subunit protein bS16 from Sulfurovum sp. (strain NBC37-1).